Consider the following 284-residue polypeptide: L-ribulose-5-phosphate 3-epimerase UlaE (284 aa).

The protein belongs to the L-ribulose-5-phosphate 3-epimerase family.

The enzyme catalyses L-ribulose 5-phosphate = L-xylulose 5-phosphate. It participates in cofactor degradation; L-ascorbate degradation; D-xylulose 5-phosphate from L-ascorbate: step 3/4. Catalyzes the isomerization of L-xylulose-5-phosphate to L-ribulose-5-phosphate. Is involved in the anaerobic L-ascorbate utilization. In Escherichia coli O45:K1 (strain S88 / ExPEC), this protein is L-ribulose-5-phosphate 3-epimerase UlaE.